A 347-amino-acid polypeptide reads, in one-letter code: MKQTIILLYGGRSAEREVSVLSAESVMRAVDYDRFTVKTFFISQSGDFIKTQEFSHDPGQEDRLMTNETIDWDKKVAPSAIYEEGAVVFPVLHGPMGEDGSVQGFLEVLKMPYVGCNILSSSLAMDKITTKRVLESAGIAQVPYVAIVEGDDVTAKIAEVEEKLAYPVFTKPSNMGSSVGISKSENQEELRQALELAFRYDSRVLVEQGVNAREIEVGLLGNYDVKSTLPGEVVKDVAFYDYDAKYIDNKITMDIPAKISDDVVAVMRQNAETAFRAIGGLGLSRCDFFYTDKGEIFLNELNTMPGFTQWSMYPLLWDNMGISYPELIERLVDLAKESFDKREAHLI.

In terms of domain architecture, ATP-grasp spans 131 to 333 (KRVLESAGIA…YPELIERLVD (203 aa)). An ATP-binding site is contributed by 161–216 (EEKLAYPVFTKPSNMGSSVGISKSENQEELRQALELAFRYDSRVLVEQGVNAREIE). Mg(2+)-binding residues include Asp287, Glu300, and Asn302.

This sequence belongs to the D-alanine--D-alanine ligase family. Requires Mg(2+) as cofactor. Mn(2+) serves as cofactor.

The protein resides in the cytoplasm. The catalysed reaction is 2 D-alanine + ATP = D-alanyl-D-alanine + ADP + phosphate + H(+). It participates in cell wall biogenesis; peptidoglycan biosynthesis. Its function is as follows. Cell wall formation. This is D-alanine--D-alanine ligase from Streptococcus pneumoniae (strain CGSP14).